The chain runs to 264 residues: Movement protein (264 aa).

Residues 221-264 (YRSRSQSVSGRGKRHSKPPNRRLDSASEESSSVSFDDGLQSDHT) form a disordered region. The segment covering 231 to 240 (RGKRHSKPPN) has biased composition (basic residues).

It belongs to the tobamovirus movement protein family.

The protein localises to the host cytoplasm. It localises to the host cytoskeleton. Its subcellular location is the host cell junction. It is found in the host plasmodesma. Transports viral genome to neighboring plant cells directly through plasmosdesmata, without any budding. The movement protein allows efficient cell to cell propagation, by bypassing the host cell wall barrier. Forms a ribonucleoprotein complex with viral RNA. Binds microtubules and modulates microtubule stability. Can bind double-stranded DNA. This chain is Movement protein (MP), found in Citrullus (Cucumber).